The primary structure comprises 390 residues: MDSDTLMPELPSDSVGLVAPQTAHFDVPLALACGKTLQSYDLVYETYGKLNASRSNAVLICHALSGHHHAAGYHSREDRKPGWWDAHIGPGKSIDTDRFFVISLNNLGGCHGSTGPCAINPDTGRQWGPDFPMMTVGDWVHSQARLADRLGIERFAAVIGGSLGGMQVLQWSLAYPERIANAVVIAATPKLSAQNIAFNEVARQAIRSDPDFYDGWYAEHDTLPRRGLKLARMVGHITYLSEDAMGSKFGRDLRSDDLNFGYDVEFQVESYLRYQGDTFSTSFDANTYLLMTKALDYFDPAAAHDGDLAAAVAPASCPFLVVSFSTDWRFPPSRSRELVDALIRAGKPVSYVCIDSPHGHDAFLLPETRYQAIFASFMGRVAHDSGLEDS.

The region spanning 56–365 (NAVLICHALS…SPHGHDAFLL (310 aa)) is the AB hydrolase-1 domain. The active-site Nucleophile is the S162. Substrate is bound at residue R232. Residues D327 and H360 contribute to the active site. Position 361 (D361) interacts with substrate.

It belongs to the AB hydrolase superfamily. MetX family. Homodimer.

Its subcellular location is the cytoplasm. The enzyme catalyses L-homoserine + succinyl-CoA = O-succinyl-L-homoserine + CoA. It participates in amino-acid biosynthesis; L-methionine biosynthesis via de novo pathway; O-succinyl-L-homoserine from L-homoserine: step 1/1. In terms of biological role, transfers a succinyl group from succinyl-CoA to L-homoserine, forming succinyl-L-homoserine. In vitro, also has serine succinyl transferase activity. The chain is Homoserine O-succinyltransferase from Litchfieldella anticariensis (strain DSM 16096 / CECT 5854 / CIP 108499 / LMG 22089 / FP35) (Halomonas anticariensis).